Here is a 182-residue protein sequence, read N- to C-terminus: tRNA-splicing endonuclease (182 aa).

Catalysis depends on residues Tyr-119, His-127, and Lys-158.

The protein belongs to the tRNA-intron endonuclease family. Archaeal short subfamily. As to quaternary structure, homotetramer; although the tetramer contains four active sites, only two participate in the cleavage. Therefore, it should be considered as a dimer of dimers.

The enzyme catalyses pretRNA = a 3'-half-tRNA molecule with a 5'-OH end + a 5'-half-tRNA molecule with a 2',3'-cyclic phosphate end + an intron with a 2',3'-cyclic phosphate and a 5'-hydroxyl terminus.. Endonuclease that removes tRNA introns. Cleaves pre-tRNA at the 5'- and 3'-splice sites to release the intron. The products are an intron and two tRNA half-molecules bearing 2',3' cyclic phosphate and 5'-OH termini. Recognizes a pseudosymmetric substrate in which 2 bulged loops of 3 bases are separated by a stem of 4 bp. This Saccharolobus islandicus (strain Y.N.15.51 / Yellowstone #2) (Sulfolobus islandicus) protein is tRNA-splicing endonuclease.